Reading from the N-terminus, the 382-residue chain is D-galactonate dehydratase (382 aa).

Residue aspartate 183 participates in Mg(2+) binding. Residue histidine 185 is the Proton donor of the active site. Residues glutamate 209 and glutamate 235 each coordinate Mg(2+). The active-site Proton acceptor is histidine 285.

Belongs to the mandelate racemase/muconate lactonizing enzyme family. GalD subfamily. It depends on Mg(2+) as a cofactor.

The enzyme catalyses D-galactonate = 2-dehydro-3-deoxy-D-galactonate + H2O. It participates in carbohydrate acid metabolism; D-galactonate degradation; D-glyceraldehyde 3-phosphate and pyruvate from D-galactonate: step 1/3. In terms of biological role, catalyzes the dehydration of D-galactonate to 2-keto-3-deoxy-D-galactonate. This is D-galactonate dehydratase from Escherichia coli (strain 55989 / EAEC).